The sequence spans 397 residues: Odorant receptor 22b (397 aa).

At 1–49 the chain is on the cytoplasmic side; sequence MLSQFFPHIKEKPLSERVKSRDAFVYLDRVMWSFGWTVPENKRWDLHYK. Residues 50-70 form a helical membrane-spanning segment; the sequence is LWSTFVTLLIFILLPISVSVE. At 71–85 the chain is on the extracellular side; the sequence is YIQRFKTFSAGEFLS. A helical transmembrane segment spans residues 86 to 105; sequence SIQIGVNMYGSSFKSYLTMM. Over 106-143 the chain is Cytoplasmic; sequence GYKKRQEAKMSLDELDKRCVCDEERTIVHRHVALGNFC. A helical transmembrane segment spans residues 144–164; sequence YIFYHIAYTSFLISNFLSFIM. The Extracellular portion of the chain corresponds to 165–194; sequence KRIHAWRMYFPYVDPEKQFYISSIAEVILR. Residues 195 to 215 form a helical membrane-spanning segment; that stretch reads GWAVFMDLCTDVCPLISMVIA. Residues 216-268 lie on the Cytoplasmic side of the membrane; sequence RCHITLLKQRLRNLRSEPGRTEDEYLKELADCVRDHRLILDYVDALRSVFSGT. The helical transmembrane segment at 269–289 threads the bilayer; that stretch reads IFVQFLLIGIVLGLSMINIMF. Over 290-295 the chain is Extracellular; that stretch reads FSTLST. The chain crosses the membrane as a helical span at residues 296-316; the sequence is GVAVVLFMSCVSMQTFPFCYL. Residues 317–347 lie on the Cytoplasmic side of the membrane; that stretch reads CNMIMDDCQEMADSLFQSDWTSADRRYKSTL. A helical membrane pass occupies residues 348–368; sequence VYFLHNLQQPIILTAGGVFPI. The Extracellular portion of the chain corresponds to 369-397; sequence SMQTNLNMVKLAFTVVTIVKQFNLAEKFQ.

This sequence belongs to the insect chemoreceptor superfamily. Heteromeric odorant receptor channel (TC 1.A.69) family. Or2a subfamily. Interacts with Orco, via conserved C-terminal cytoplasmic loops. Complexes exist early in the endomembrane system in olfactory sensory neurons (OSNs), coupling these complexes to the conserved ciliary trafficking pathway. In terms of tissue distribution, expressed with Orco in 20-22 sensory neurons on the medial-proximal edge of the antenna. This expression pattern matches the distribution of the large sensilla basiconica. Expression is first seen at 60 hours APF in a subset of cells restricted to a subregion of the developing antenna. Expression continues throughout antennal development. Expressed in the ab3A neuron which responds to ethyl butyrate.

The protein localises to the cell membrane. Its function is as follows. Odorant receptor which mediates acceptance or avoidance behavior, depending on its substrates. The odorant receptor repertoire encodes a large collection of odor stimuli that vary widely in identity, intensity, and duration. Involved in the behavioral responses to esters. Complexes with Orco to form odorant-sensing units, providing sensitive and prolonged odorant signaling and calcium permeability. They are necessary and sufficient to promote functional reconstitution of odor-evoked signaling in sensory neurons that normally respond only to carbon dioxide. This Drosophila melanogaster (Fruit fly) protein is Odorant receptor 22b (Or22b).